A 544-amino-acid polypeptide reads, in one-letter code: Chaperonin GroEL 1 (544 aa).

ATP is bound by residues 29-32 (TLGP), 86-90 (DGTTT), Gly413, 482-484 (NVL), and Asp498.

Belongs to the chaperonin (HSP60) family. As to quaternary structure, forms a cylinder of 14 subunits composed of two heptameric rings stacked back-to-back. Interacts with the co-chaperonin GroES.

Its subcellular location is the cytoplasm. The catalysed reaction is ATP + H2O + a folded polypeptide = ADP + phosphate + an unfolded polypeptide.. Together with its co-chaperonin GroES, plays an essential role in assisting protein folding. The GroEL-GroES system forms a nano-cage that allows encapsulation of the non-native substrate proteins and provides a physical environment optimized to promote and accelerate protein folding. In Chloroflexus aurantiacus (strain ATCC 29366 / DSM 635 / J-10-fl), this protein is Chaperonin GroEL 1.